The following is a 194-amino-acid chain: Ras-related protein Rab-22A (194 aa).

12-20 (GDTGVGKSS) provides a ligand contact to GTP. An Effector region motif is present at residues 34-42 (INPTIGASF). GTP-binding positions include 60–64 (DTAGQ), 118–121 (NKCD), and 148–150 (SAK). Positions 170-194 (DANPPSGGKGFKLRRQPSEPQRSCC) are disordered. S-geranylgeranyl cysteine attachment occurs at residues C193 and C194.

The protein belongs to the small GTPase superfamily. Rab family. In terms of assembly, interacts directly with ZFYVE20. Interacts (in its GTP-bound form) with RINL and RABGEF1. Binds EEA1.

Its subcellular location is the endosome membrane. It localises to the cell membrane. It is found in the early endosome. The protein localises to the late endosome. The protein resides in the cell projection. Its subcellular location is the ruffle. It localises to the cytoplasmic vesicle. It is found in the phagosome. The protein localises to the phagosome membrane. Plays a role in endocytosis and intracellular protein transport. Mediates trafficking of TF from early endosomes to recycling endosomes. Required for NGF-mediated endocytosis of NTRK1, and subsequent neurite outgrowth. Binds GTP and GDP and has low GTPase activity. Alternates between a GTP-bound active form and a GDP-bound inactive form. This chain is Ras-related protein Rab-22A (RAB22A), found in Canis lupus familiaris (Dog).